A 335-amino-acid polypeptide reads, in one-letter code: MDERIISSETVDAEEVSFETSLRPQTLSQYIGQDKVKNNLTVFIEAATLRNEALDHVLLYGPPGLGKTTLAMVIASEMGSQIKTTSGPAIERPGDLATILTSLEPGDVLFIDEIHRLSRAIEEILYPAMEDYCLDIVIGTGPTARSVRLDLPPFTLIGATTRAGLLSAPLRDRFGVIDHLEFYTEEQLTEIVLRTSNILDTKIDDLGAREIARRSRGTPRIANRLLKRVRDFAQVRGNGTVTEKLAKEALTLLQVDPRGLDTIDQKLLHTIIQSFRGGPVGLDTIAASIGEERETIEDMQEPYLLQIGFLQRTPRGRIATETAYNHLGISYEKEV.

The segment at 1-183 is large ATPase domain (RuvB-L); sequence MDERIISSET…FGVIDHLEFY (183 aa). ATP contacts are provided by residues L22, R23, G64, K67, T68, T69, 130-132, R173, Y183, and R220; that span reads EDY. T68 provides a ligand contact to Mg(2+). The interval 184–254 is small ATPAse domain (RuvB-S); it reads TEEQLTEIVL…LAKEALTLLQ (71 aa). The interval 257-335 is head domain (RuvB-H); it reads PRGLDTIDQK…HLGISYEKEV (79 aa). Residues R293, R312, and R317 each contribute to the DNA site.

Belongs to the RuvB family. In terms of assembly, homohexamer. Forms an RuvA(8)-RuvB(12)-Holliday junction (HJ) complex. HJ DNA is sandwiched between 2 RuvA tetramers; dsDNA enters through RuvA and exits via RuvB. An RuvB hexamer assembles on each DNA strand where it exits the tetramer. Each RuvB hexamer is contacted by two RuvA subunits (via domain III) on 2 adjacent RuvB subunits; this complex drives branch migration. In the full resolvosome a probable DNA-RuvA(4)-RuvB(12)-RuvC(2) complex forms which resolves the HJ.

Its subcellular location is the cytoplasm. The enzyme catalyses ATP + H2O = ADP + phosphate + H(+). The RuvA-RuvB-RuvC complex processes Holliday junction (HJ) DNA during genetic recombination and DNA repair, while the RuvA-RuvB complex plays an important role in the rescue of blocked DNA replication forks via replication fork reversal (RFR). RuvA specifically binds to HJ cruciform DNA, conferring on it an open structure. The RuvB hexamer acts as an ATP-dependent pump, pulling dsDNA into and through the RuvAB complex. RuvB forms 2 homohexamers on either side of HJ DNA bound by 1 or 2 RuvA tetramers; 4 subunits per hexamer contact DNA at a time. Coordinated motions by a converter formed by DNA-disengaged RuvB subunits stimulates ATP hydrolysis and nucleotide exchange. Immobilization of the converter enables RuvB to convert the ATP-contained energy into a lever motion, pulling 2 nucleotides of DNA out of the RuvA tetramer per ATP hydrolyzed, thus driving DNA branch migration. The RuvB motors rotate together with the DNA substrate, which together with the progressing nucleotide cycle form the mechanistic basis for DNA recombination by continuous HJ branch migration. Branch migration allows RuvC to scan DNA until it finds its consensus sequence, where it cleaves and resolves cruciform DNA. This chain is Holliday junction branch migration complex subunit RuvB, found in Listeria monocytogenes serotype 4a (strain HCC23).